Reading from the N-terminus, the 231-residue chain is ATP phosphoribosyltransferase (231 aa).

Belongs to the ATP phosphoribosyltransferase family. Short subfamily. Heteromultimer composed of HisG and HisZ subunits.

The protein localises to the cytoplasm. It carries out the reaction 1-(5-phospho-beta-D-ribosyl)-ATP + diphosphate = 5-phospho-alpha-D-ribose 1-diphosphate + ATP. Its pathway is amino-acid biosynthesis; L-histidine biosynthesis; L-histidine from 5-phospho-alpha-D-ribose 1-diphosphate: step 1/9. Catalyzes the condensation of ATP and 5-phosphoribose 1-diphosphate to form N'-(5'-phosphoribosyl)-ATP (PR-ATP). Has a crucial role in the pathway because the rate of histidine biosynthesis seems to be controlled primarily by regulation of HisG enzymatic activity. This Sinorhizobium fredii (strain NBRC 101917 / NGR234) protein is ATP phosphoribosyltransferase (hisG).